A 204-amino-acid polypeptide reads, in one-letter code: Small heat shock protein, chloroplastic (204 aa).

Residues 34–55 (QMGRVDHDHELDDRSNRAPISR) are disordered. The segment covering 37–49 (RVDHDHELDDRSN) has biased composition (basic and acidic residues). The 107-residue stretch at 98-204 (GSGRAMRRGW…KKDVFQVMVD (107 aa)) folds into the sHSP domain.

Belongs to the small heat shock protein (HSP20) family.

It is found in the plastid. Its subcellular location is the chloroplast stroma. This chain is Small heat shock protein, chloroplastic (HSP23), found in Oxybasis rubra (Red goosefoot).